The primary structure comprises 265 residues: Putative hydro-lyase PA14_37210 (265 aa).

Belongs to the D-glutamate cyclase family.

The chain is Putative hydro-lyase PA14_37210 from Pseudomonas aeruginosa (strain UCBPP-PA14).